The primary structure comprises 449 residues: Phosphoglucosamine mutase (449 aa).

The active-site Phosphoserine intermediate is the Ser101. Residues Ser101, Asp242, Asp244, and Asp246 each contribute to the Mg(2+) site. Phosphoserine is present on Ser101.

Belongs to the phosphohexose mutase family. Mg(2+) serves as cofactor. Activated by phosphorylation.

It catalyses the reaction alpha-D-glucosamine 1-phosphate = D-glucosamine 6-phosphate. Functionally, catalyzes the conversion of glucosamine-6-phosphate to glucosamine-1-phosphate. The polypeptide is Phosphoglucosamine mutase (Hyphomonas neptunium (strain ATCC 15444)).